Here is a 240-residue protein sequence, read N- to C-terminus: Sugar fermentation stimulation protein homolog (240 aa).

The protein belongs to the SfsA family.

This Methanothermobacter thermautotrophicus (strain ATCC 29096 / DSM 1053 / JCM 10044 / NBRC 100330 / Delta H) (Methanobacterium thermoautotrophicum) protein is Sugar fermentation stimulation protein homolog.